The primary structure comprises 464 residues: Protein FAM90A26 (464 aa).

Disordered regions lie at residues 1 to 42 (MMAC…DPRL), 70 to 293 (PPTL…AKRP), 312 to 390 (PFQI…DGAQ), and 410 to 442 (AAPSFHSPEKPGAFLAQSPHVSEKSEVPRVRVP). 2 stretches are compositionally biased toward basic and acidic residues: residues 74-83 (GKKEGKENLK) and 97-114 (NKDKGEKEERPRQQDPQR). A compositionally biased stretch (low complexity) spans 178-197 (SALASLSPLRKASLSSSSSL).

The protein belongs to the FAM90 family.

The polypeptide is Protein FAM90A26 (Homo sapiens (Human)).